A 478-amino-acid polypeptide reads, in one-letter code: D(1B) dopamine receptor (478 aa).

The Extracellular segment spans residues 1 to 38; it reads MLPPGRNGTAHRARLGLQRQLAQVDAPGGSAAPLGPAQ. Residue Asn7 is glycosylated (N-linked (GlcNAc...) asparagine). The helical transmembrane segment at 39-64 threads the bilayer; sequence VVTAGLLTLLIVWTLLGNVLVCAAIV. Over 65–75 the chain is Cytoplasmic; it reads RSRHLRAKMTN. Residues 76 to 102 form a helical membrane-spanning segment; sequence IFIVSLAVSDLFVALLVMPWKAVAEVA. The Extracellular portion of the chain corresponds to 103 to 111; the sequence is GYWPFGAFC. A disulfide bridge connects residues Cys111 and Cys211. Residues 112-134 traverse the membrane as a helical segment; that stretch reads DIWVAFDIMCSTASILNLCIISV. Over 135-153 the chain is Cytoplasmic; sequence DRYWAISRPFRYERKMTQR. The helical transmembrane segment at 154-179 threads the bilayer; the sequence is VALVMVALAWTLSILISFIPVQLNWH. The Extracellular portion of the chain corresponds to 180 to 215; it reads RDKAGSQGREGLLSNETPWEEGWELDGRTENCDSSL. The chain crosses the membrane as a helical span at residues 216–240; it reads NRTYAISSSLISFYIPVAIMIVTYT. Topologically, residues 241 to 289 are cytoplasmic; that stretch reads RIYRIAQVQIRRISSLERAAEHAQSCRSRGACEPDPSLRASIKKETKVF. Residues 290–317 traverse the membrane as a helical segment; the sequence is KTLSVIMGVFVCCWLPFFILNCMVPFCS. The Extracellular portion of the chain corresponds to 318 to 335; that stretch reads SGDAQGPRTGFPCVSETT. Residues 336 to 357 form a helical membrane-spanning segment; sequence FDIFVWFGWANSSLNPIIYAFN. At 358–478 the chain is on the cytoplasmic side; it reads ADFRKVFAQL…LTPNCFHKTA (121 aa). The S-palmitoyl cysteine moiety is linked to residue Cys370. The segment at 416-446 is disordered; sequence GDREVGEEEEAEEEGPFDHMSQISPTTPDGD. A compositionally biased stretch (acidic residues) spans 420–430; that stretch reads VGEEEEAEEEG.

The protein belongs to the G-protein coupled receptor 1 family.

The protein resides in the cell membrane. Its function is as follows. Dopamine receptor whose activity is mediated by G proteins which activate adenylyl cyclase. This is D(1B) dopamine receptor (Drd5) from Mus musculus (Mouse).